The primary structure comprises 255 residues: Hydroxyacylglutathione hydrolase (255 aa).

Positions 55, 57, 59, 60, 113, 132, and 170 each coordinate Zn(2+).

Belongs to the metallo-beta-lactamase superfamily. Glyoxalase II family. Monomer. Zn(2+) serves as cofactor.

The catalysed reaction is an S-(2-hydroxyacyl)glutathione + H2O = a 2-hydroxy carboxylate + glutathione + H(+). It functions in the pathway secondary metabolite metabolism; methylglyoxal degradation; (R)-lactate from methylglyoxal: step 2/2. Its function is as follows. Thiolesterase that catalyzes the hydrolysis of S-D-lactoyl-glutathione to form glutathione and D-lactic acid. In Methylobacterium nodulans (strain LMG 21967 / CNCM I-2342 / ORS 2060), this protein is Hydroxyacylglutathione hydrolase.